The primary structure comprises 236 residues: Purine nucleoside phosphorylase DeoD-type (236 aa).

His-4 serves as a coordination point for a purine D-ribonucleoside. Phosphate is bound by residues Gly-20, Arg-24, Arg-43, and 87 to 90 (RVGT). A purine D-ribonucleoside-binding positions include 179-181 (EME) and 203-204 (SD). The active-site Proton donor is the Asp-204.

Belongs to the PNP/UDP phosphorylase family. Homohexamer; trimer of homodimers.

The catalysed reaction is a purine D-ribonucleoside + phosphate = a purine nucleobase + alpha-D-ribose 1-phosphate. It carries out the reaction a purine 2'-deoxy-D-ribonucleoside + phosphate = a purine nucleobase + 2-deoxy-alpha-D-ribose 1-phosphate. Catalyzes the reversible phosphorolytic breakdown of the N-glycosidic bond in the beta-(deoxy)ribonucleoside molecules, with the formation of the corresponding free purine bases and pentose-1-phosphate. This chain is Purine nucleoside phosphorylase DeoD-type, found in Streptococcus pneumoniae serotype 2 (strain D39 / NCTC 7466).